The chain runs to 146 residues: Hemoglobin subunit beta (146 aa).

In terms of domain architecture, Globin spans 2-146 (HWTAEEKQLI…VAHALARKYH (145 aa)). Heme b is bound by residues H63 and H92.

Belongs to the globin family. As to quaternary structure, heterotetramer of two alpha chains and two beta chains. In terms of tissue distribution, red blood cells.

Involved in oxygen transport from the lung to the various peripheral tissues. The sequence is that of Hemoglobin subunit beta (HBB) from Phalacrocorax carbo (Great cormorant).